Reading from the N-terminus, the 863-residue chain is MEERYNPEKVEPLWQAYWNQHQTFKATEDGSKPKYYLLEMFPYPSGKIHMGHVRNYTIGDVVVRYKRMKGFNVLHPMGWDAFGMPAENAAIDNNTHPAAWTYENIRTMRRQLKRMGFSYDWDREIATCRPEYYRWEQWLFLKMLDKDMVYRKESYVNWCDHCQTVLANEQVEQDMCWRCGKPVQQKKLWQWFFRITDFAEDLLVHCDKLPGWPDNVTLMQKNWIGKSQGSEIRFPIQGIDENIPVFTTRPDTLFGSTFMCLAPEHPLVETLSRGTDQAAAVTEFTTRVLNQERSSIALEKYEKEGVFTGAWCINPVTREKMPIYTANFALMEYGTGAVMSVPAHDQRDFDFARKYGLPIKVVIQPPGEPLDPATMIEAYTGQGTLADSGEFSGLGNLEAMGAITRWLENKGLGKTTVSFRLRDWGISRQRYWGTPIPVIHCPDCGIVPVKEETLPVVLPEDAALLDNGGSPLATLDGFARVNCPVCNRADARRETDTMDTFVESSWYFARYCSPRYDKGMFDPAAVAYWMPVDQYIGGVEHAILHLLYSRYFMRVLNTLGLIDFKEPFERLLTQGMVCKETLTCPEHGFIYPDDAETVNDKVICKRCNSDVEVGRVIKMSKSKKNVIDPNALLDQYGADITRLFCLFAAPPEKDLEWNDDGVEGCNRFINRVWRLADRCKSTYIDLLPYSGVVADLKGEPKKLFIKANQTIKKVTDDIEESFHFNTAISAVMELVNAMYSADLDPDQTDMGEVALFCIENIVLLLSPIVPHFCEELWSILGHGPSIVDQPWPDYQKDALLTDEILIVVQVNGKLRSKFSVDAAVSDDFIRKAALADEQVEKYIKGKTIKKVIVVKKKLVNIVV.

The short motif at 42–52 (PYPSGKIHMGH) is the 'HIGH' region element. The short motif at 618–622 (KMSKS) is the 'KMSKS' region element. Lys-621 contributes to the ATP binding site.

Belongs to the class-I aminoacyl-tRNA synthetase family.

It is found in the cytoplasm. The enzyme catalyses tRNA(Leu) + L-leucine + ATP = L-leucyl-tRNA(Leu) + AMP + diphosphate. The polypeptide is Leucine--tRNA ligase (Desulforapulum autotrophicum (strain ATCC 43914 / DSM 3382 / VKM B-1955 / HRM2) (Desulfobacterium autotrophicum)).